We begin with the raw amino-acid sequence, 168 residues long: MPISQKNQNFIDRTFSIIANILLRIIPTTSGEKEAFAYYINGMSAQSEGNYAEALQNYYQAMHLEMDPYDRSYILYNIGIIHTSNGEHSKALEYYCRAIERNPFLPQAFNNMAVICHYRGEQAIQQGDSEIAEAWFDQAAEYWKQARTLTPDNYIEAQNWLTITWRSK.

TPR repeat units lie at residues 35–68 (AFAY…EMDP), 72–105 (SYIL…NPFL), and 120–153 (GEQA…TPDN).

It belongs to the Ycf3 family.

Its subcellular location is the plastid membrane. In terms of biological role, essential for the assembly of the photosystem I (PSI) complex. May act as a chaperone-like factor to guide the assembly of the PSI subunits. The sequence is that of Photosystem I assembly protein Ycf3 from Cuscuta obtusiflora (Peruvian dodder).